The following is a 357-amino-acid chain: Dehydrogenase FUB6 (357 aa).

Belongs to the zinc-containing alcohol dehydrogenase family. Quinone oxidoreductase subfamily.

The protein operates within mycotoxin biosynthesis. Its function is as follows. Dehydrogenase; part of the gene cluster that mediates the biosynthesis of fusaric acid, a mycotoxin with low to moderate toxicity to animals and humans, but with high phytotoxic properties. L-aspartate is suggested as fusaric acid amino acid precursor that is activated and further processed to O-acetyl-L-homoserine by cluster enzymes aspartate kinase FUB3 and homoserine O-acetyltransferase FUB5, as well as enzymes of the primary metabolism. The polyketide synthase (PKS) FUB1 generates the triketide trans-2-hexenal which is presumptively released by the hydrolase FUB4 and linked to the NRPS-bound amino acid precursor by NAD(P)-dependent dehydrogenase FUB6. FUB1, FUB4, and the non-canonical NRPS Fub8 may form an enzyme complex. Further processing of the NRPS-bound intermediate might be carried out by FUB6 and the O-acetylhomoserine FUB7, enabling a spontaneous electrocyclization to close the carbon backbone of fusaric acid. Dihydrofusaric acid is likely to be released via reduction by the thioester reductase (TR) domain of FUB8 whereupon the final oxidation to fusaric acid may (also) be performed by the FMN-dependent dehydrogenase FUB9. This is Dehydrogenase FUB6 from Gibberella moniliformis (strain M3125 / FGSC 7600) (Maize ear and stalk rot fungus).